The following is a 331-amino-acid chain: MKQTVYIASPESQQIHVWNLNHEGALTLTQVVDVPGQVQPMVVSPDKRYLYVGVRPEFRVLAYRIAPDDGALTFAAESALPGSPTHISTDHQGQFVFVGSYNAGNVSVTRLEDGLPVGVVDVVEGLDGCHSANISPDNRTLWVPALKQDRICLFTVSDDGHLVAQDPAEVTTVEGAGPRHMVFHPNEQYAYCVNELNSSVDVWELKDPHGNIECVQTLDMMPENFSDTRWAADIHITPDGRHLYACDRTASLITVFSVSEDGSVLSKEGFQPTETQPRGFNVDHSGKYLIAAGQKSHHISVYEIVGEQGLLHEKGRYAVGQGPMWVVVNAH.

K287 is subject to N6-acetyllysine.

Belongs to the cycloisomerase 2 family.

It carries out the reaction 6-phospho-D-glucono-1,5-lactone + H2O = 6-phospho-D-gluconate + H(+). It functions in the pathway carbohydrate degradation; pentose phosphate pathway; D-ribulose 5-phosphate from D-glucose 6-phosphate (oxidative stage): step 2/3. Functionally, catalyzes the hydrolysis of 6-phosphogluconolactone to 6-phosphogluconate. The chain is 6-phosphogluconolactonase from Escherichia coli O139:H28 (strain E24377A / ETEC).